The primary structure comprises 432 residues: 3-phosphoshikimate 1-carboxyvinyltransferase (432 aa).

3-phosphoshikimate contacts are provided by lysine 25, serine 26, and arginine 30. Lysine 25 lines the phosphoenolpyruvate pocket. Residues glycine 97 and arginine 125 each coordinate phosphoenolpyruvate. 4 residues coordinate 3-phosphoshikimate: serine 170, glutamine 172, aspartate 318, and lysine 345. Glutamine 172 serves as a coordination point for phosphoenolpyruvate. The active-site Proton acceptor is the aspartate 318. Phosphoenolpyruvate-binding residues include arginine 349 and arginine 393.

Belongs to the EPSP synthase family. In terms of assembly, monomer.

The protein localises to the cytoplasm. It catalyses the reaction 3-phosphoshikimate + phosphoenolpyruvate = 5-O-(1-carboxyvinyl)-3-phosphoshikimate + phosphate. It participates in metabolic intermediate biosynthesis; chorismate biosynthesis; chorismate from D-erythrose 4-phosphate and phosphoenolpyruvate: step 6/7. Its function is as follows. Catalyzes the transfer of the enolpyruvyl moiety of phosphoenolpyruvate (PEP) to the 5-hydroxyl of shikimate-3-phosphate (S3P) to produce enolpyruvyl shikimate-3-phosphate and inorganic phosphate. The protein is 3-phosphoshikimate 1-carboxyvinyltransferase of Geobacillus thermodenitrificans (strain NG80-2).